We begin with the raw amino-acid sequence, 189 residues long: Class A basic helix-loop-helix protein 15 (189 aa).

Residues 1-12 (MKTKNRPPRRRA) show a composition bias toward basic residues. Disordered stretches follow at residues 1 to 85 (MKTK…ERER) and 167 to 189 (TEAQ…REGT). Residue Thr25 is modified to Phosphothreonine. The segment covering 68–85 (GRRDSSIQRRLESNERER) has biased composition (basic and acidic residues). In terms of domain architecture, bHLH spans 75 to 127 (QRRLESNERERQRMHKLNNAFQALREVIPHVRADKKLSKIETLTLAKNYIKSL).

As to quaternary structure, forms homodimers or heterodimers with TCF3 gene products E12 and E47. These dimers bind to the E-box site, however, heterodimer with MYOD1 does not bind target DNA. In terms of tissue distribution, expressed in brain, liver, spleen and skeletal muscle.

It localises to the nucleus. Functionally, plays a role in controlling the transcriptional activity of MYOD1, ensuring that expanding myoblast populations remain undifferentiated. Repression may occur through muscle-specific E-box occupancy by homodimers. May also negatively regulate bHLH-mediated transcription through an N-terminal repressor domain. Serves as a key regulator of acinar cell function, stability, and identity. Also required for normal organelle localization in exocrine cells and for mitochondrial calcium ion transport. May function as a unique regulator of gene expression in several different embryonic and postnatal cell lineages. Binds to the E-box consensus sequence 5'-CANNTG-3'. In Homo sapiens (Human), this protein is Class A basic helix-loop-helix protein 15 (BHLHA15).